Consider the following 403-residue polypeptide: Enoyl-[acyl-carrier-protein] reductase [NADH] (403 aa).

Residues 49-54, 75-76, 112-113, and 141-142 each bind NAD(+); these read GASSGY, FE, DA, and LA. Residue Tyr-227 coordinates substrate. Residue Tyr-237 is the Proton donor of the active site. Residues Lys-246 and 276–278 contribute to the NAD(+) site; that span reads VVT.

It belongs to the TER reductase family. As to quaternary structure, monomer.

It catalyses the reaction a 2,3-saturated acyl-[ACP] + NAD(+) = a (2E)-enoyl-[ACP] + NADH + H(+). It participates in lipid metabolism; fatty acid biosynthesis. Functionally, involved in the final reduction of the elongation cycle of fatty acid synthesis (FAS II). Catalyzes the reduction of a carbon-carbon double bond in an enoyl moiety that is covalently linked to an acyl carrier protein (ACP). In Pseudomonas putida (strain GB-1), this protein is Enoyl-[acyl-carrier-protein] reductase [NADH].